Here is an 81-residue protein sequence, read N- to C-terminus: Photosystem I iron-sulfur center (81 aa).

4Fe-4S ferredoxin-type domains are found at residues 2-31 (VHVV…MVPW) and 39-68 (IASS…IRVY). C11, C14, C17, C21, C48, C51, C54, and C58 together coordinate [4Fe-4S] cluster.

In terms of assembly, the eukaryotic PSI reaction center is composed of at least 11 subunits. [4Fe-4S] cluster is required as a cofactor.

Its subcellular location is the plastid. The protein resides in the chloroplast thylakoid membrane. The enzyme catalyses reduced [plastocyanin] + hnu + oxidized [2Fe-2S]-[ferredoxin] = oxidized [plastocyanin] + reduced [2Fe-2S]-[ferredoxin]. Apoprotein for the two 4Fe-4S centers FA and FB of photosystem I (PSI); essential for photochemical activity. FB is the terminal electron acceptor of PSI, donating electrons to ferredoxin. The C-terminus interacts with PsaA/B/D and helps assemble the protein into the PSI complex. Required for binding of PsaD and PsaE to PSI. PSI is a plastocyanin/cytochrome c6-ferredoxin oxidoreductase, converting photonic excitation into a charge separation, which transfers an electron from the donor P700 chlorophyll pair to the spectroscopically characterized acceptors A0, A1, FX, FA and FB in turn. The sequence is that of Photosystem I iron-sulfur center from Cyanidium caldarium (Red alga).